Consider the following 255-residue polypeptide: Uridylate kinase (255 aa).

The interval 1–21 (MSAAAAGRGERLNHAGNPGHR) is disordered. 30–33 (KLGG) contacts ATP. UMP is bound at residue glycine 71. ATP contacts are provided by glycine 72 and arginine 76. UMP is bound by residues aspartate 91 and 152–159 (MGLPYFST). ATP contacts are provided by phenylalanine 185 and aspartate 188.

This sequence belongs to the UMP kinase family. Homohexamer.

It is found in the cytoplasm. The catalysed reaction is UMP + ATP = UDP + ADP. It functions in the pathway pyrimidine metabolism; CTP biosynthesis via de novo pathway; UDP from UMP (UMPK route): step 1/1. Inhibited by UTP. Its function is as follows. Catalyzes the reversible phosphorylation of UMP to UDP. This Mycobacterium leprae (strain TN) protein is Uridylate kinase.